Here is a 64-residue protein sequence, read N- to C-terminus: Large ribosomal subunit protein eL24 (64 aa).

Residues C6, C9, C32, and C36 each contribute to the Zn(2+) site. Residues 6–36 (CNFCGKSIEPGTGKKFVKKDGSVMFICSSKC) form a C4-type zinc finger.

It belongs to the eukaryotic ribosomal protein eL24 family. As to quaternary structure, part of the 50S ribosomal subunit. Forms a cluster with proteins L3 and L14. Zn(2+) is required as a cofactor.

Functionally, binds to the 23S rRNA. This is Large ribosomal subunit protein eL24 from Methanococcus aeolicus (strain ATCC BAA-1280 / DSM 17508 / OCM 812 / Nankai-3).